The following is a 305-amino-acid chain: Acyl transferase (305 aa).

Active-site charge relay system residues include serine 116, aspartate 213, and histidine 243.

Belongs to the LuxD family.

It participates in lipid metabolism; fatty acid reduction for biolumincescence. Acyl transferase is part of the fatty acid reductase system required for aldehyde biosynthesis; it produces fatty acids for the luminescent reaction. The polypeptide is Acyl transferase (Photobacterium leiognathi).